A 291-amino-acid polypeptide reads, in one-letter code: ATP synthase gamma chain (291 aa).

The protein belongs to the ATPase gamma chain family. In terms of assembly, F-type ATPases have 2 components, CF(1) - the catalytic core - and CF(0) - the membrane proton channel. CF(1) has five subunits: alpha(3), beta(3), gamma(1), delta(1), epsilon(1). CF(0) has three main subunits: a, b and c.

The protein resides in the cell membrane. Functionally, produces ATP from ADP in the presence of a proton gradient across the membrane. The gamma chain is believed to be important in regulating ATPase activity and the flow of protons through the CF(0) complex. The sequence is that of ATP synthase gamma chain from Streptococcus pyogenes serotype M49 (strain NZ131).